The primary structure comprises 56 residues: Ovomucoid (56 aa).

The Kazal-like domain occupies 6 to 56 (VDCSDHPKPACLQEQKPLCGSDNKTYDNKCSFCNAVVDSNGTLTLSHFGKC). 3 disulfides stabilise this stretch: C8–C38, C16–C35, and C24–C56. N-linked (GlcNAc...) asparagine glycosylation is present at N45.

Its subcellular location is the secreted. The polypeptide is Ovomucoid (Penelope jacquacu (Spix's guan)).